Reading from the N-terminus, the 116-residue chain is Large ribosomal subunit protein uL18 (116 aa).

The protein belongs to the universal ribosomal protein uL18 family. Part of the 50S ribosomal subunit; part of the 5S rRNA/L5/L18/L25 subcomplex. Contacts the 5S and 23S rRNAs.

Its function is as follows. This is one of the proteins that bind and probably mediate the attachment of the 5S RNA into the large ribosomal subunit, where it forms part of the central protuberance. The protein is Large ribosomal subunit protein uL18 of Azotobacter vinelandii (strain DJ / ATCC BAA-1303).